Consider the following 626-residue polypeptide: ABC transporter G family member 8 (626 aa).

Positions 56-300 constitute an ABC transporter domain; that stretch reads VNLDNKTENS…SLGYPCPNNT (245 aa). 90 to 97 contributes to the ATP binding site; the sequence is GPSGSGKS. The 249-residue stretch at 373–621 folds into the ABC transmembrane type-2 domain; the sequence is GNALSRVITA…SLSYFALHFL (249 aa). The next 7 membrane-spanning stretches (helical) occupy residues 376–396, 409–429, 447–467, 485–505, 515–535, 543–563, and 600–620; these read LSRV…FAGL, TLFF…TLFL, FPYF…VTLV, FFFA…FISS, LTFS…GFYV, AFGW…VVIN, and FGVL…ALHF.

Belongs to the ABC transporter superfamily. ABCG family. Eye pigment precursor importer (TC 3.A.1.204) subfamily.

Its subcellular location is the membrane. The sequence is that of ABC transporter G family member 8 (abcG8) from Dictyostelium discoideum (Social amoeba).